The sequence spans 139 residues: ATP synthase epsilon chain (139 aa).

The protein belongs to the ATPase epsilon chain family. F-type ATPases have 2 components, CF(1) - the catalytic core - and CF(0) - the membrane proton channel. CF(1) has five subunits: alpha(3), beta(3), gamma(1), delta(1), epsilon(1). CF(0) has three main subunits: a, b and c.

Its subcellular location is the cell membrane. Produces ATP from ADP in the presence of a proton gradient across the membrane. This Pediococcus pentosaceus (strain ATCC 25745 / CCUG 21536 / LMG 10740 / 183-1w) protein is ATP synthase epsilon chain.